A 785-amino-acid polypeptide reads, in one-letter code: Probable serine protease Ga0098714_109514 (785 aa).

Basic and acidic residues-rich tracts occupy residues 470–481 (LDHGKNGREGGR) and 491–501 (DGPEHPNHYAD). Disordered stretches follow at residues 470–503 (LDHGKNGREGGRDVSAGPHGSDGPEHPNHYADID) and 608–629 (DGDASRTVTRHHPRTGEDEEVS).

The protein belongs to the peptidase S1 family.

Functionally, probably a dedicated protease for substrate gasdermin bGSDM; cleaves the bGSDM precursor, releasing the pore-forming moiety, which integrates into the membrane and triggers cell death. Involved in defense against bacteriophages. Expression of gasdermin bGSDM and this neighboring protease is toxic in E.coli on solid medium. This chain is Probable serine protease Ga0098714_109514, found in Bradyrhizobium tropiciagri.